We begin with the raw amino-acid sequence, 195 residues long: Cytochrome c oxidase subunit 1 (195 aa).

The helical transmembrane segment at 12-32 threads the bilayer; the sequence is MYWVLGFIFLFTLGGLTGIVL. Mg(2+)-binding residues include His-42 and Asp-43. His-50 serves as a coordination point for heme a3. Residue His-52 coordinates Fe(II)-heme a. Helical transmembrane passes span 59 to 79, 88 to 108, and 131 to 151; these read AVFAIFAGFNFWFPVMTGLVL, FIVMFIAVNMTFFPQHFLGLA, and GSLMSVFAVLLFVLIVWEAFL.

This sequence belongs to the heme-copper respiratory oxidase family. In terms of assembly, component of the cytochrome c oxidase (complex IV, CIV), a multisubunit enzyme composed of a catalytic core of 3 subunits and several supernumerary subunits. The complex exists as a monomer or a dimer and forms supercomplexes (SCs) in the inner mitochondrial membrane with ubiquinol-cytochrome c oxidoreductase (cytochrome b-c1 complex, complex III, CIII). Heme is required as a cofactor. Cu cation serves as cofactor.

It is found in the mitochondrion inner membrane. It carries out the reaction 4 Fe(II)-[cytochrome c] + O2 + 8 H(+)(in) = 4 Fe(III)-[cytochrome c] + 2 H2O + 4 H(+)(out). Its pathway is energy metabolism; oxidative phosphorylation. In terms of biological role, component of the cytochrome c oxidase, the last enzyme in the mitochondrial electron transport chain which drives oxidative phosphorylation. The respiratory chain contains 3 multisubunit complexes succinate dehydrogenase (complex II, CII), ubiquinol-cytochrome c oxidoreductase (cytochrome b-c1 complex, complex III, CIII) and cytochrome c oxidase (complex IV, CIV), that cooperate to transfer electrons derived from NADH and succinate to molecular oxygen, creating an electrochemical gradient over the inner membrane that drives transmembrane transport and the ATP synthase. Cytochrome c oxidase is the component of the respiratory chain that catalyzes the reduction of oxygen to water. Electrons originating from reduced cytochrome c in the intermembrane space (IMS) are transferred via the dinuclear copper A center (CU(A)) of subunit 2 and heme A of subunit 1 to the active site in subunit 1, a binuclear center (BNC) formed by heme A3 and copper B (CU(B)). The BNC reduces molecular oxygen to 2 water molecules using 4 electrons from cytochrome c in the IMS and 4 protons from the mitochondrial matrix. This is Cytochrome c oxidase subunit 1 (COI) from Albinaria turrita (Door snail).